Consider the following 155-residue polypeptide: Ciliary microtubule inner protein 2C (155 aa).

It belongs to the CIMIP2 family.

The protein resides in the cytoplasm. The protein localises to the cytoskeleton. Its subcellular location is the cilium axoneme. In terms of biological role, microtubule inner protein (MIP) part of the dynein-decorated doublet microtubules (DMTs) in cilia axoneme, which is required for motile cilia beating. This Xenopus laevis (African clawed frog) protein is Ciliary microtubule inner protein 2C (cimip2cb).